A 210-amino-acid polypeptide reads, in one-letter code: Small ribosomal subunit protein uS3 (210 aa).

Residues Ile-17–Lys-86 enclose the KH type-2 domain.

This sequence belongs to the universal ribosomal protein uS3 family. Part of the 30S ribosomal subunit.

Its function is as follows. Binds the lower part of the 30S subunit head. The sequence is that of Small ribosomal subunit protein uS3 from Pyrococcus horikoshii (strain ATCC 700860 / DSM 12428 / JCM 9974 / NBRC 100139 / OT-3).